A 178-amino-acid polypeptide reads, in one-letter code: Large ribosomal subunit protein uL6 (178 aa).

The protein belongs to the universal ribosomal protein uL6 family. As to quaternary structure, part of the 50S ribosomal subunit.

Its function is as follows. This protein binds to the 23S rRNA, and is important in its secondary structure. It is located near the subunit interface in the base of the L7/L12 stalk, and near the tRNA binding site of the peptidyltransferase center. This chain is Large ribosomal subunit protein uL6, found in Staphylococcus carnosus (strain TM300).